Here is a 444-residue protein sequence, read N- to C-terminus: Probable ribonuclease FAU-1 (444 aa).

This sequence belongs to the FAU-1 family.

In terms of biological role, probable RNase involved in rRNA stability through maturation and/or degradation of precursor rRNAs. Binds to RNA in loop regions with AU-rich sequences. This Pyrobaculum arsenaticum (strain DSM 13514 / JCM 11321 / PZ6) protein is Probable ribonuclease FAU-1.